A 334-amino-acid polypeptide reads, in one-letter code: uncharacterized protein (334 aa).

The protein belongs to the Gfo/Idh/MocA family.

This is an uncharacterized protein from Rhizobium meliloti (Ensifer meliloti).